Reading from the N-terminus, the 187-residue chain is UPF0301 protein Clim_0777 (187 aa).

It belongs to the UPF0301 (AlgH) family.

This is UPF0301 protein Clim_0777 from Chlorobium limicola (strain DSM 245 / NBRC 103803 / 6330).